The primary structure comprises 1343 residues: MVYSYSEKKRIRKDFGKRPQVLDIPYLLSIQLDSFKKFTDQDPTGERGFEAAFRSVFPIKSFSGYSELQYVSYKLGEPVFDVKECQIRGVTYSAPLRVKLRMVLFDREAAAGTVKDIKEQEVYMGDIPLMTDNGTFVINGTERVIVSQLHRSPGVFFDHDRGKTHSSGKVLYNARIIPYRGSWLDFEFDPKDALFVRIDRRRKLPATIMLRALEYSTQDILDLFFERIQFKIKKDSLVMALVPDRLRGETASYDIKAADGSVLVEAGRRITARHIKQLEQSNTTELEVPVDYIVGKYAAQDYIDEDTGEVLVSANNEISLEDLAKLSIAGIKEIDTLFINDLDHGAYISDTLRIDSTTNRLEALVEIYRMMRPGEPPTKDAAEALFQNLFFSEERYDLSKVGRMKFNRRLEIAEDEGNGVLSKDDIVCVMKKIIEIRNGYDEVDDIDHLGNRRIRSVGEMAENQFRVGLVRVERAVRERLSLGDLNELMPQDLINAKPISAAVKEFFGSSQLSQFMDQNNPLSEVTHKRRISALGPGGLTRERAGFEVRDVHPTHYGRLCPIETPEGPNIGLINSLASFARTNSYGFLETPYRKVVEGVITDEVEYLSAIEEGRYVIAQANIEVDSTGRMVEEQIACRHKGESTFMRAADIQYMDVSPQQIISVAASLIPFLEHDDANRALMGANMQRQAVPTLRADKPLVGTGIERTLAVDSGVVVVAKRGGVVDYVDASRIVVKVNEDELRPGEAGIDIYNLTKYTRSNQNTCINQRPCCFVGEPVVRGDVLADGPSTDLGELALGQNMRIAFMPWNGYNFEDSILISERVAQEDRFTTIHIQELSCIARDTKLGSEEITADIPNVGESALSKLDESGIVYIGAEVKGGDILVGKVTPKGETQLTPEEKLLRAIFGEKASDVKDSSLRVPNSVKGTIIDVQVFTRDGVEKDKRALEIEEMHVAQARKDLGEEFKILEEGVLSRARNLLLSAGYSEAKLAELPRKDVLIQVIDDEAKQTELEQLAEQHEELKADFDKKFEIKRRKITQGDDLAPGVLKIVKVYLAVKRTIQPGDKMAGRHGNKGVISKICPVEDMPYDEEGNPVDIVLNPLGVPSRMNIGQVLEVHMGAAAKGIGNKITAMLEEQREIAELRGYIKQVYELGDDVLQRVDIDSFSDDEVVRLATHLKGGIPIATPAFDGAKEKEIKQMLALAGLPESGQLTLCDGRTGNEFERKVTVGYMYMLKLNHLVDDKMHARSTGSYSLVTQQPLGGKAQFGGQRFGEMEVWALEAYGAAYTLQEMLTVKSDDVNGRTQMYKNIVDGNHQMQPGMPESFNVLLKEIRSLGINIELDQE.

The protein belongs to the RNA polymerase beta chain family. In terms of assembly, the RNAP catalytic core consists of 2 alpha, 1 beta, 1 beta' and 1 omega subunit. When a sigma factor is associated with the core the holoenzyme is formed, which can initiate transcription.

The catalysed reaction is RNA(n) + a ribonucleoside 5'-triphosphate = RNA(n+1) + diphosphate. Functionally, DNA-dependent RNA polymerase catalyzes the transcription of DNA into RNA using the four ribonucleoside triphosphates as substrates. This Shewanella denitrificans (strain OS217 / ATCC BAA-1090 / DSM 15013) protein is DNA-directed RNA polymerase subunit beta.